An 801-amino-acid chain; its full sequence is Quinoprotein glucose dehydrogenase A (801 aa).

The first 33 residues, 1 to 33 (MNQPTSRSGLTTFTVIIIGLLALFLLIGGIWLA), serve as a signal peptide directing secretion. The next 4 helical transmembrane spans lie at 39–55 (IYYI…AWQL), 59–79 (ASTA…WSVW), 94–108 (ILGI…PAVT), and 119–138 (VALS…SIFN). D471 acts as the Proton acceptor in catalysis.

The protein belongs to the bacterial PQQ dehydrogenase family. Monomer. Pyrroloquinoline quinone is required as a cofactor.

The protein resides in the cell inner membrane. It catalyses the reaction D-glucose + A = D-glucono-1,5-lactone + AH2. Functionally, catalyzes an exceptionally high rate of oxidation of a wide range of aldose sugars, including D-glucose, galactose, arabinose and xylose, and also the disaccharides lactose, cellobiose and maltose. This chain is Quinoprotein glucose dehydrogenase A (gdhA), found in Acinetobacter calcoaceticus.